A 643-amino-acid chain; its full sequence is tRNA 5-methylaminomethyl-2-thiouridine biosynthesis bifunctional protein MnmC (643 aa).

The tract at residues 1–223 is tRNA (mnm(5)s(2)U34)-methyltransferase; that stretch reads MPDRLVSATL…VDDRLVGDYA (223 aa). The segment at 247–643 is FAD-dependent cmnm(5)s(2)U34 oxidoreductase; sequence IGAGLAGCAV…LRARRVGSAG (397 aa).

It in the N-terminal section; belongs to the methyltransferase superfamily. tRNA (mnm(5)s(2)U34)-methyltransferase family. This sequence in the C-terminal section; belongs to the DAO family. FAD is required as a cofactor.

It localises to the cytoplasm. The catalysed reaction is 5-aminomethyl-2-thiouridine(34) in tRNA + S-adenosyl-L-methionine = 5-methylaminomethyl-2-thiouridine(34) in tRNA + S-adenosyl-L-homocysteine + H(+). Its function is as follows. Catalyzes the last two steps in the biosynthesis of 5-methylaminomethyl-2-thiouridine (mnm(5)s(2)U) at the wobble position (U34) in tRNA. Catalyzes the FAD-dependent demodification of cmnm(5)s(2)U34 to nm(5)s(2)U34, followed by the transfer of a methyl group from S-adenosyl-L-methionine to nm(5)s(2)U34, to form mnm(5)s(2)U34. The polypeptide is tRNA 5-methylaminomethyl-2-thiouridine biosynthesis bifunctional protein MnmC (Burkholderia orbicola (strain MC0-3)).